Here is a 446-residue protein sequence, read N- to C-terminus: Tripartite motif-containing protein 43B (446 aa).

The segment at 15–56 (CVICLNYLVDPVTICCGHSFCRPCLCLSWEEAQSPANCPACR) adopts an RING-type zinc-finger fold. A B box-type zinc finger spans residues 88–129 (SEKQICGTHRQTKKMFCDMDKSLLCLLCSNSQEHGAHKHYPI). Zn(2+) contacts are provided by C93, H96, C115, and H121. Coiled-coil stretches lie at residues 129 to 158 (IEEA…QRNL) and 190 to 220 (LHKE…VKMD). The B30.2/SPRY domain occupies 269-446 (ELTAGPITGL…VRPFFYTGHR (178 aa)).

This sequence belongs to the TRIM/RBCC family.

This Homo sapiens (Human) protein is Tripartite motif-containing protein 43B (TRIM43B).